We begin with the raw amino-acid sequence, 341 residues long: 2-keto-4-carboxy-3-hexenedioate hydratase (341 aa).

Positions 8 and 10 each coordinate Zn(2+). 71–73 (RAS) contributes to the substrate binding site. H178 contributes to the Zn(2+) binding site. Substrate contacts are provided by Y194 and H223. The active-site Proton donor/acceptor is the E284. R290 is a binding site for substrate.

Belongs to the metallo-dependent hydrolases superfamily. Homodimer. Zn(2+) serves as cofactor.

The enzyme catalyses (3Z)-2-oxo-4-carboxy-3-hexenedioate + H2O = (2S)-2-hydroxy-4-oxobutane-1,2,4-tricarboxylate. The protein operates within secondary metabolite metabolism; lignin degradation. Its function is as follows. Contributes to the degradation of lignin at the level of the protocatechuate 4,5-cleavage pathway. Catalyzes the hydration of the double bond of (3Z)-2-keto-4-carboxy-3-hexenedioate (KCH) to (4S)-4-carboxy-4-hydroxy-2-oxoadipate (CHA, also named (2S)-2-hydroxy-4-oxobutane-1,2,4-tricarboxylate). Is involved in the catabolism of both vanillate and syringate. This is 2-keto-4-carboxy-3-hexenedioate hydratase from Sphingobium sp. (strain NBRC 103272 / SYK-6).